The primary structure comprises 174 residues: ATP synthase subunit delta, sodium ion specific (174 aa).

This sequence belongs to the ATPase delta chain family. F-type ATPases have 2 components, F(1) - the catalytic core - and F(0) - the membrane proton channel. F(1) has five subunits: alpha(3), beta(3), gamma(1), delta(1), epsilon(1). F(0) has three main subunits: a(1), b(2) and c(10-14). The alpha and beta chains form an alternating ring which encloses part of the gamma chain. F(1) is attached to F(0) by a central stalk formed by the gamma and epsilon chains, while a peripheral stalk is formed by the delta and b chains.

The protein localises to the cell inner membrane. Its function is as follows. F(1)F(0) ATP synthase produces ATP from ADP in the presence of a proton or sodium gradient. F-type ATPases consist of two structural domains, F(1) containing the extramembraneous catalytic core and F(0) containing the membrane proton channel, linked together by a central stalk and a peripheral stalk. During catalysis, ATP synthesis in the catalytic domain of F(1) is coupled via a rotary mechanism of the central stalk subunits to proton translocation. In terms of biological role, this protein is part of the stalk that links CF(0) to CF(1). It either transmits conformational changes from CF(0) to CF(1) or is implicated in proton conduction. This chain is ATP synthase subunit delta, sodium ion specific, found in Propionigenium modestum.